The sequence spans 197 residues: Cytochrome c biogenesis ATP-binding export protein CcmA (197 aa).

Positions 1–196 (MSMLSLHQLQ…VIKSAQILQL (196 aa)) constitute an ABC transporter domain. Residue 35 to 42 (GANGSGKS) coordinates ATP.

This sequence belongs to the ABC transporter superfamily. CcmA exporter (TC 3.A.1.107) family. In terms of assembly, the complex is composed of two ATP-binding proteins (CcmA) and two transmembrane proteins (CcmB).

Its subcellular location is the cell inner membrane. The enzyme catalyses heme b(in) + ATP + H2O = heme b(out) + ADP + phosphate + H(+). In terms of biological role, part of the ABC transporter complex CcmAB involved in the biogenesis of c-type cytochromes; once thought to export heme, this seems not to be the case, but its exact role is uncertain. Responsible for energy coupling to the transport system. This chain is Cytochrome c biogenesis ATP-binding export protein CcmA, found in Rickettsia typhi (strain ATCC VR-144 / Wilmington).